The sequence spans 415 residues: Mitochondrial distribution and morphology protein 12 (415 aa).

The SMP-LTD domain occupies 1–402; it reads MSFDINWSEL…WPSWVCFDLN (402 aa). Residues 53–146 form a disordered region; it reads EITIRHIGDP…PPLTDLRRSR (94 aa). Composition is skewed to acidic residues over residues 62–75 and 92–103; these read PFDD…DDDE and NSSDDDEDDEYD.

It belongs to the MDM12 family. Component of the ER-mitochondria encounter structure (ERMES) or MDM complex, composed of MMM1, MDM10, MDM12 and MDM34. An MMM1 homodimer associates with one molecule of MDM12 on each side in a pairwise head-to-tail manner, and the SMP-LTD domains of MMM1 and MDM12 generate a continuous hydrophobic tunnel for phospholipid trafficking.

The protein localises to the mitochondrion outer membrane. It is found in the endoplasmic reticulum membrane. Component of the ERMES/MDM complex, which serves as a molecular tether to connect the endoplasmic reticulum (ER) and mitochondria. Components of this complex are involved in the control of mitochondrial shape and protein biogenesis, and function in nonvesicular lipid trafficking between the ER and mitochondria. MDM12 is required for the interaction of the ER-resident membrane protein MMM1 and the outer mitochondrial membrane-resident beta-barrel protein MDM10. The MDM12-MMM1 subcomplex functions in the major beta-barrel assembly pathway that is responsible for biogenesis of all mitochondrial outer membrane beta-barrel proteins, and acts in a late step after the SAM complex. The MDM10-MDM12-MMM1 subcomplex further acts in the TOM40-specific pathway after the action of the MDM12-MMM1 complex. Essential for establishing and maintaining the structure of mitochondria and maintenance of mtDNA nucleoids. This Debaryomyces hansenii (strain ATCC 36239 / CBS 767 / BCRC 21394 / JCM 1990 / NBRC 0083 / IGC 2968) (Yeast) protein is Mitochondrial distribution and morphology protein 12.